The chain runs to 296 residues: Pyridoxine/pyridoxal/pyridoxamine kinase (296 aa).

Substrate contacts are provided by Ser-23 and His-59. ATP is bound at residue Asp-125. Tyr-136 contacts Mg(2+). ATP-binding positions include Thr-157, Glu-162, Thr-195, 222–225 (HQRV), and Thr-232. Residue Glu-162 participates in Mg(2+) binding. Residue Asp-234 participates in substrate binding.

Belongs to the pyridoxine kinase family. PdxK subfamily. Homodimer. The cofactor is Mg(2+).

It catalyses the reaction pyridoxal + ATP = pyridoxal 5'-phosphate + ADP + H(+). It carries out the reaction pyridoxine + ATP = pyridoxine 5'-phosphate + ADP + H(+). The catalysed reaction is pyridoxamine + ATP = pyridoxamine 5'-phosphate + ADP + H(+). The protein operates within cofactor metabolism; pyridoxal 5'-phosphate salvage; pyridoxal 5'-phosphate from pyridoxal: step 1/1. It participates in cofactor metabolism; pyridoxal 5'-phosphate salvage; pyridoxine 5'-phosphate from pyridoxine: step 1/1. It functions in the pathway cofactor metabolism; pyridoxal 5'-phosphate salvage; pyridoxamine 5'-phosphate from pyridoxamine: step 1/1. Its function is as follows. B6-vitamer kinase involved in the salvage pathway of pyridoxal 5'-phosphate (PLP). Catalyzes the phosphorylation of pyridoxine (PN), pyridoxal (PL), and pyridoxamine (PM), forming their respective 5'-phosphorylated esters, i.e. PNP, PLP and PMP. The protein is Pyridoxine/pyridoxal/pyridoxamine kinase of Bordetella avium (strain 197N).